Reading from the N-terminus, the 283-residue chain is MSTSGTLTSYYVDSLILPENEELSVPRYSAGPGHQHSRQPASIGDPHSELGTCSFPSKPPVFGPSWSHVPAQFPGTVSSVYHHHYGHHQGPVGTETDGRYQSWLLEPMSGSLPMAGLPTTHHYGIKPDGLGVRSGGALPGSHTALLLSDYANGTVATAPPVEKDAVSSHTGDGVDTEEKPGLDPSKSAVYITFYLYRTYSGDRDNPVSNWLHASATRKKRCPYTKHQILELEKEFLFNTYLTRDRRYEVARLLNLTERQVKIWFQNRRMKMKKFNKDGAPKDD.

2 disordered regions span residues 25–54 (VPRY…GTCS) and 162–181 (EKDA…EKPG). Positions 216–275 (TRKKRCPYTKHQILELEKEFLFNTYLTRDRRYEVARLLNLTERQVKIWFQNRRMKMKKFN) form a DNA-binding region, homeobox.

This sequence belongs to the Abd-B homeobox family.

It localises to the nucleus. Functionally, sequence-specific transcription factor which is part of a developmental regulatory system that provides cells with specific positional identities on the anterior-posterior axis. This chain is Homeobox protein Hox-A9a (hoxa9a), found in Takifugu rubripes (Japanese pufferfish).